The primary structure comprises 72 residues: Translation initiation factor IF-1 (72 aa).

Residues 1–72 (MSKQDVIELE…SRGRITWRKK (72 aa)) enclose the S1-like domain.

This sequence belongs to the IF-1 family. Component of the 30S ribosomal translation pre-initiation complex which assembles on the 30S ribosome in the order IF-2 and IF-3, IF-1 and N-formylmethionyl-tRNA(fMet); mRNA recruitment can occur at any time during PIC assembly.

It localises to the cytoplasm. Its function is as follows. One of the essential components for the initiation of protein synthesis. Stabilizes the binding of IF-2 and IF-3 on the 30S subunit to which N-formylmethionyl-tRNA(fMet) subsequently binds. Helps modulate mRNA selection, yielding the 30S pre-initiation complex (PIC). Upon addition of the 50S ribosomal subunit IF-1, IF-2 and IF-3 are released leaving the mature 70S translation initiation complex. This is Translation initiation factor IF-1 from Alkaliphilus oremlandii (strain OhILAs) (Clostridium oremlandii (strain OhILAs)).